We begin with the raw amino-acid sequence, 324 residues long: Lactonase drp35 (324 aa).

Residues Glu-47, Ser-109, Gly-111, Asp-129, Thr-132, Tyr-134, Asp-137, Asn-184, Asp-235, and Ser-236 each coordinate Ca(2+). Asp-235 acts as the Proton donor in catalysis.

It belongs to the SMP-30/CGR1 family. The cofactor is Ca(2+).

The protein resides in the cytoplasm. Functionally, exhibits lactonase activity. Acts in cells with perturbed membrane integrity and is possibly related to the membrane homeostasis. The polypeptide is Lactonase drp35 (drp35) (Staphylococcus aureus (strain USA300)).